A 209-amino-acid polypeptide reads, in one-letter code: Thiamine-phosphate synthase (209 aa).

4-amino-2-methyl-5-(diphosphooxymethyl)pyrimidine contacts are provided by residues 37-41 and N69; that span reads QLREK. The Mg(2+) site is built by D70 and D89. S108 is a 4-amino-2-methyl-5-(diphosphooxymethyl)pyrimidine binding site. 134–136 is a 2-[(2R,5Z)-2-carboxy-4-methylthiazol-5(2H)-ylidene]ethyl phosphate binding site; sequence TNT. K137 contacts 4-amino-2-methyl-5-(diphosphooxymethyl)pyrimidine. Residues G164 and 184-185 each bind 2-[(2R,5Z)-2-carboxy-4-methylthiazol-5(2H)-ylidene]ethyl phosphate; that span reads VS.

Belongs to the thiamine-phosphate synthase family. Mg(2+) serves as cofactor.

The catalysed reaction is 2-[(2R,5Z)-2-carboxy-4-methylthiazol-5(2H)-ylidene]ethyl phosphate + 4-amino-2-methyl-5-(diphosphooxymethyl)pyrimidine + 2 H(+) = thiamine phosphate + CO2 + diphosphate. The enzyme catalyses 2-(2-carboxy-4-methylthiazol-5-yl)ethyl phosphate + 4-amino-2-methyl-5-(diphosphooxymethyl)pyrimidine + 2 H(+) = thiamine phosphate + CO2 + diphosphate. It catalyses the reaction 4-methyl-5-(2-phosphooxyethyl)-thiazole + 4-amino-2-methyl-5-(diphosphooxymethyl)pyrimidine + H(+) = thiamine phosphate + diphosphate. The protein operates within cofactor biosynthesis; thiamine diphosphate biosynthesis; thiamine phosphate from 4-amino-2-methyl-5-diphosphomethylpyrimidine and 4-methyl-5-(2-phosphoethyl)-thiazole: step 1/1. Functionally, condenses 4-methyl-5-(beta-hydroxyethyl)thiazole monophosphate (THZ-P) and 2-methyl-4-amino-5-hydroxymethyl pyrimidine pyrophosphate (HMP-PP) to form thiamine monophosphate (TMP). The protein is Thiamine-phosphate synthase of Methanobrevibacter smithii (strain ATCC 35061 / DSM 861 / OCM 144 / PS).